Consider the following 37-residue polypeptide: Large ribosomal subunit protein bL36 (37 aa).

Belongs to the bacterial ribosomal protein bL36 family.

The chain is Large ribosomal subunit protein bL36 from Persephonella marina (strain DSM 14350 / EX-H1).